Here is a 503-residue protein sequence, read N- to C-terminus: Drimenol monooxygenase (503 aa).

Residues 7–23 traverse the membrane as a helical segment; the sequence is MICIVVSGLLLYSSRTS. Serine 471 provides a ligand contact to heme.

This sequence belongs to the cytochrome P450 family. Heme is required as a cofactor.

The protein localises to the membrane. It catalyses the reaction (5S,9S,10S)-drim-7-en-11-ol + reduced [NADPH--hemoprotein reductase] + O2 = (5S,10S)-(9R)-7-drimene-11,12-diol + oxidized [NADPH--hemoprotein reductase] + H2O + H(+). In terms of biological role, catalyzes the conversion of drimenol to drimendiol, a precursor of the sesquiterpenoid polygodial. Polygodial has been shown to be an antifeedant for a number of herbivorous insects. The sequence is that of Drimenol monooxygenase from Persicaria hydropiper (Marshpepper knotweed).